The primary structure comprises 598 residues: Dihydroxy-acid dehydratase astD, mitochondrial (598 aa).

The transit peptide at 1 to 111 (MFASRIRSRA…HRAGLVPMRF (111 aa)) directs the protein to the mitochondrion. The segment at 23-50 (RLPASTTGRRYKSDETLNRVSSKITQPK) is disordered. Residues 40–50 (NRVSSKITQPK) show a composition bias toward polar residues. A [2Fe-2S] cluster-binding site is contributed by Cys-86. Residue Asp-118 participates in Mg(2+) binding. Cys-159 is a binding site for [2Fe-2S] cluster. Asp-160 lines the Mg(2+) pocket. Cys-232 contacts [2Fe-2S] cluster. Glu-485 is a binding site for Mg(2+). Catalysis depends on Ser-511, which acts as the Proton acceptor.

Belongs to the IlvD/Edd family. [2Fe-2S] cluster is required as a cofactor. Requires Mg(2+) as cofactor.

The protein resides in the mitochondrion. It carries out the reaction (2R)-2,3-dihydroxy-3-methylbutanoate = 3-methyl-2-oxobutanoate + H2O. It catalyses the reaction (2R,3R)-2,3-dihydroxy-3-methylpentanoate = (S)-3-methyl-2-oxopentanoate + H2O. It functions in the pathway amino-acid biosynthesis; L-isoleucine biosynthesis; L-isoleucine from 2-oxobutanoate: step 3/4. The protein operates within amino-acid biosynthesis; L-valine biosynthesis; L-valine from pyruvate: step 3/4. DHAD activity is not inhibited by the dihydroxyacid dehydratase inhibitor aspterric acid (AA). In terms of biological role, dihydroxyacid dehydratase; part of the gene cluster that mediates the biosynthesis of the sesquiterpenoid aspterric acid (AA), an inhibitor of dihydroxy-acid dehydratase (DHAD) effective as an herbicide. Performs the third step in the common pathway leading to biosynthesis of branched-chain amino acids. Catalyzes the dehydration of (2R,3R)-2,3-dihydroxy-3-methylpentanoate (2,3-dihydroxy-3-methylvalerate) into 2-oxo-3-methylpentanoate (2-oxo-3-methylvalerate) and of (2R)-2,3-dihydroxy-3-methylbutanoate (2,3-dihydroxyisovalerate) into 2-oxo-3-methylbutanoate (2-oxoisovalerate), the penultimate precursor to L-isoleucine and L-valine, respectively. AstD confers self-resistance in the presence of the dihydroxyacid dehydratase inhibitor aspterric acid (AA) produced by the ast cluster. The polypeptide is Dihydroxy-acid dehydratase astD, mitochondrial (Aspergillus terreus (strain NIH 2624 / FGSC A1156)).